A 638-amino-acid polypeptide reads, in one-letter code: Threonine--tRNA ligase (638 aa).

One can recognise a TGS domain in the interval M1–T61. The tract at residues D242 to P533 is catalytic. 3 residues coordinate Zn(2+): C333, H384, and H510.

This sequence belongs to the class-II aminoacyl-tRNA synthetase family. In terms of assembly, homodimer. Requires Zn(2+) as cofactor.

The protein resides in the cytoplasm. The catalysed reaction is tRNA(Thr) + L-threonine + ATP = L-threonyl-tRNA(Thr) + AMP + diphosphate + H(+). Functionally, catalyzes the attachment of threonine to tRNA(Thr) in a two-step reaction: L-threonine is first activated by ATP to form Thr-AMP and then transferred to the acceptor end of tRNA(Thr). Also edits incorrectly charged L-seryl-tRNA(Thr). The protein is Threonine--tRNA ligase of Prochlorococcus marinus (strain MIT 9211).